Reading from the N-terminus, the 569-residue chain is Cell death protein 4 (569 aa).

The CARD domain occupies methionine 1–leucine 91. Residues aspartate 116 to isoleucine 442 enclose the NB-ARC domain. Residues phenylalanine 131, glycine 162 to valine 167, and glutamine 171 each bind ATP. Residue serine 166 coordinates Mg(2+).

Associates as an asymmetric homodimer with ced-9. Upon release from ced-9, forms an octamer, known as the apoptosome, and interacts with ced-3; the interaction results in ced-3 autoproteolytic cleavage and activation. The octamer (a tetramer of an asymmetric dimer) also interacts with two processed ced-3 to form a stable holoenzyme. Interacts with sex-determining protein fem-1. May form a complex composed of ced-3, ced-4 and mac-1 or of ced-9, ced-4 and mac-1. Within the complex, interacts with ced-4.

The protein localises to the mitochondrion. Its subcellular location is the cytoplasm. It localises to the perinuclear region. Its function is as follows. Plays a major role in programmed cell death (PCD, apoptosis). egl-1 binds to and directly inhibits the activity of ced-9, releasing the cell death activator ced-4 from a ced-9/ced-4 containing protein complex and allowing ced-4 to induce caspase ced-3 autoproteolytic cleavage and activation. Also forms a holoenzyme with processed ced-3 enhancing ced-3 activity. Component of the egl-1, ced-9, ced-4 and ced-3 apoptotic signaling cascade required for the initiation of programmed cell death in cells fated to die during embryonic and postembryonic development. During oogenesis, required for germline apoptosis downstream of ced-9 and upstream of ced-3 but independently of egl-1. May regulate germline apoptosis in response to DNA damage, probably downstream of let-60/ras and mpk-1 pathway. Regulates CEP neuron apoptosis in response to high Al(3+) levels. During male tail morphogenesis, promotes apoptosis of the tail-spike cell. During larval development, required for the elimination of transient presynaptic components downstream of egl-1 and ced-9 and upstream of ced-3 apoptotic pathway. Together with ain-1, a component of the miRNA-induced-silencing complex (miRISC), and probably upstream of ced-3, regulates temporal cell fate patterning during larval development. May play a role in resistance to S.typhimurium-mediated infection. The chain is Cell death protein 4 from Caenorhabditis briggsae.